Here is a 396-residue protein sequence, read N- to C-terminus: Mevalonate kinase (396 aa).

ATP contacts are provided by residues Lys13, Asn55, Ser135, and 140-146; that span reads GAGLGSS. Catalysis depends on Ser146, which acts as the Proton donor. Residues Ser146 and Glu193 each coordinate Mg(2+). Residue Asp204 is the Proton acceptor of the active site.

The protein belongs to the GHMP kinase family. Mevalonate kinase subfamily. Homodimer. Requires Mg(2+) as cofactor.

The protein localises to the cytoplasm. It is found in the peroxisome. It carries out the reaction (R)-mevalonate + ATP = (R)-5-phosphomevalonate + ADP + H(+). Its pathway is isoprenoid biosynthesis; isopentenyl diphosphate biosynthesis via mevalonate pathway; isopentenyl diphosphate from (R)-mevalonate: step 1/3. With respect to regulation, farnesyl pyrophosphate and geranyl pyrophosphate inhibit mevalonate kinase activity by binding competitively at the ATP-binding sites. Catalyzes the phosphorylation of mevalonate to mevalonate 5-phosphate, a key step in isoprenoid and cholesterol biosynthesis. In Homo sapiens (Human), this protein is Mevalonate kinase.